Reading from the N-terminus, the 170-residue chain is Peroxidase 2 (170 aa).

Residue asparagine 9 is glycosylated (N-linked (GlcNAc...) asparagine). Position 24 (histidine 24) interacts with heme b. Threonine 25 is a Ca(2+) binding site. An intrachain disulfide couples cysteine 31 to cysteine 59. Ca(2+) contacts are provided by aspartate 73, threonine 76, and aspartate 81.

Belongs to the peroxidase family. Classical plant (class III) peroxidase subfamily. The cofactor is Ca(2+). Requires heme b as cofactor.

It carries out the reaction 2 a phenolic donor + H2O2 = 2 a phenolic radical donor + 2 H2O. In terms of biological role, removal of H(2)O(2), oxidation of toxic reductants, biosynthesis and degradation of lignin, suberization, auxin catabolism, response to environmental stresses such as wounding, pathogen attack and oxidative stress. These functions might be dependent on each isozyme/isoform in each plant tissue. Its function is as follows. Involved in defense response to powdery meldew fungus. The polypeptide is Peroxidase 2 (Hordeum vulgare (Barley)).